The sequence spans 45 residues: Mu-conotoxin-like Cal 12.1.1d (45 aa).

Disulfide bonds link cysteine 3–cysteine 16, cysteine 11–cysteine 28, cysteine 18–cysteine 33, and cysteine 27–cysteine 39. Tryptophan 17 carries the post-translational modification 6'-bromotryptophan. Glutamate 21 carries the 4-carboxyglutamate modification. Proline 23 is modified (4-hydroxyproline). 6'-bromotryptophan is present on residues tryptophan 37 and tryptophan 38. Residue proline 40 is modified to 4-hydroxyproline. Tryptophan 44 carries the 6'-bromotryptophan modification.

In terms of tissue distribution, expressed by the venom duct.

It localises to the secreted. Its function is as follows. Mu-conotoxins block voltage-gated sodium channels. This toxin reversibly blocks voltage-gated sodium channel in cephalopods, with no alteration in the voltage dependence of sodium conductance or on the kinetics of inactivation. This chain is Mu-conotoxin-like Cal 12.1.1d, found in Californiconus californicus (California cone).